A 69-amino-acid polypeptide reads, in one-letter code: Putative membrane protein insertion efficiency factor (69 aa).

Belongs to the UPF0161 family.

It is found in the cell membrane. Could be involved in insertion of integral membrane proteins into the membrane. This Clostridium botulinum (strain 657 / Type Ba4) protein is Putative membrane protein insertion efficiency factor.